A 97-amino-acid polypeptide reads, in one-letter code: Mitochondrial import inner membrane translocase subunit Tim8 A (97 aa).

The short motif at C43 to C66 is the Twin CX3C motif element. Intrachain disulfides connect C43/C66 and C47/C62. 4 positions are modified to phosphoserine: S57, S87, S94, and S96.

Belongs to the small Tim family. In terms of assembly, heterohexamer; composed of 3 copies of TIMM8A and 3 copies of TIMM13, named soluble 70 kDa complex. Associates with the TIM22 complex, whose core is composed of TIMM22.

It is found in the mitochondrion inner membrane. Mitochondrial intermembrane chaperone that participates in the import and insertion of some multi-pass transmembrane proteins into the mitochondrial inner membrane. Also required for the transfer of beta-barrel precursors from the TOM complex to the sorting and assembly machinery (SAM complex) of the outer membrane. Acts as a chaperone-like protein that protects the hydrophobic precursors from aggregation and guide them through the mitochondrial intermembrane space. The TIMM8-TIMM13 complex mediates the import of proteins such as TIMM23, SLC25A12/ARALAR1 and SLC25A13/ARALAR2, while the predominant TIMM9-TIMM10 70 kDa complex mediates the import of much more proteins. The chain is Mitochondrial import inner membrane translocase subunit Tim8 A (Timm8a) from Rattus norvegicus (Rat).